Consider the following 1392-residue polypeptide: DNA-directed RNA polymerase subunit beta' (1392 aa).

Zn(2+) is bound by residues Cys70, Cys72, Cys85, and Cys88. Residues Asp460, Asp462, and Asp464 each contribute to the Mg(2+) site. Zn(2+) is bound by residues Cys810, Cys884, Cys891, and Cys894.

It belongs to the RNA polymerase beta' chain family. As to quaternary structure, the RNAP catalytic core consists of 2 alpha, 1 beta, 1 beta' and 1 omega subunit. When a sigma factor is associated with the core the holoenzyme is formed, which can initiate transcription. Mg(2+) serves as cofactor. It depends on Zn(2+) as a cofactor.

The enzyme catalyses RNA(n) + a ribonucleoside 5'-triphosphate = RNA(n+1) + diphosphate. Its function is as follows. DNA-dependent RNA polymerase catalyzes the transcription of DNA into RNA using the four ribonucleoside triphosphates as substrates. This chain is DNA-directed RNA polymerase subunit beta', found in Geobacter metallireducens (strain ATCC 53774 / DSM 7210 / GS-15).